The chain runs to 61 residues: MNEAYHSIQTLLNKMDRQMKTVKEAIEEKDLQRAHRNLINLADNNEELMQEIRWVKKGTIL.

The stretch at 7–57 forms a coiled coil; sequence SIQTLLNKMDRQMKTVKEAIEEKDLQRAHRNLINLADNNEELMQEIRWVKK.

The polypeptide is SPbeta prophage-derived uncharacterized protein YotK (yotK) (Bacillus subtilis (strain 168)).